We begin with the raw amino-acid sequence, 172 residues long: Large ribosomal subunit protein uL10 (172 aa).

This sequence belongs to the universal ribosomal protein uL10 family. Part of the ribosomal stalk of the 50S ribosomal subunit. The N-terminus interacts with L11 and the large rRNA to form the base of the stalk. The C-terminus forms an elongated spine to which L12 dimers bind in a sequential fashion forming a multimeric L10(L12)X complex.

In terms of biological role, forms part of the ribosomal stalk, playing a central role in the interaction of the ribosome with GTP-bound translation factors. This chain is Large ribosomal subunit protein uL10, found in Methylobacterium radiotolerans (strain ATCC 27329 / DSM 1819 / JCM 2831 / NBRC 15690 / NCIMB 10815 / 0-1).